A 237-amino-acid polypeptide reads, in one-letter code: Ribosomal RNA small subunit methyltransferase G (237 aa).

Residues G76, F81, 99-101 (DSS), 128-129 (IE), and R147 each bind S-adenosyl-L-methionine.

It belongs to the methyltransferase superfamily. RNA methyltransferase RsmG family.

The protein resides in the cytoplasm. In terms of biological role, specifically methylates the N7 position of a guanine in 16S rRNA. The polypeptide is Ribosomal RNA small subunit methyltransferase G (Prochlorococcus marinus (strain MIT 9312)).